We begin with the raw amino-acid sequence, 404 residues long: S-adenosylmethionine synthase (404 aa).

Residue 139 to 144 participates in ATP binding; it reads GKGSSD.

It belongs to the AdoMet synthase 2 family. The cofactor is Mg(2+).

The enzyme catalyses L-methionine + ATP + H2O = S-adenosyl-L-methionine + phosphate + diphosphate. It participates in amino-acid biosynthesis; S-adenosyl-L-methionine biosynthesis; S-adenosyl-L-methionine from L-methionine: step 1/1. Its function is as follows. Catalyzes the formation of S-adenosylmethionine from methionine and ATP. The protein is S-adenosylmethionine synthase of Saccharolobus solfataricus (strain ATCC 35092 / DSM 1617 / JCM 11322 / P2) (Sulfolobus solfataricus).